Reading from the N-terminus, the 69-residue chain is Protein transport protein Sec61 subunit gamma-1 (69 aa).

An N-acetylmethionine modification is found at methionine 1. At 1–32 (MDAIDSVVDPLRDFAKDSIRLVKRCHKPDRKE) the chain is on the cytoplasmic side. The chain crosses the membrane as a helical span at residues 33–61 (FTKVAVRTAIGFVVMGFVGFFVKLIFIPI). The Extracellular portion of the chain corresponds to 62 to 69 (NNIIVGAT).

The protein belongs to the SecE/SEC61-gamma family. Heterotrimeric complex composed of SEC61-alpha, SEC61-beta and SEC61-gamma.

The protein resides in the endoplasmic reticulum membrane. Functionally, necessary for protein translocation in the endoplasmic reticulum. The polypeptide is Protein transport protein Sec61 subunit gamma-1 (SEC61G1) (Arabidopsis thaliana (Mouse-ear cress)).